Reading from the N-terminus, the 92-residue chain is Translation initiation factor IF-1 (92 aa).

Positions 1–72 (MAKEELIQFE…EKGRLIFRHK (72 aa)) constitute an S1-like domain. The disordered stretch occupies residues 69-92 (FRHKDERPGGPPRSGPPRGQFRRR).

The protein belongs to the IF-1 family. In terms of assembly, component of the 30S ribosomal translation pre-initiation complex which assembles on the 30S ribosome in the order IF-2 and IF-3, IF-1 and N-formylmethionyl-tRNA(fMet); mRNA recruitment can occur at any time during PIC assembly.

It is found in the cytoplasm. Its function is as follows. One of the essential components for the initiation of protein synthesis. Stabilizes the binding of IF-2 and IF-3 on the 30S subunit to which N-formylmethionyl-tRNA(fMet) subsequently binds. Helps modulate mRNA selection, yielding the 30S pre-initiation complex (PIC). Upon addition of the 50S ribosomal subunit IF-1, IF-2 and IF-3 are released leaving the mature 70S translation initiation complex. The sequence is that of Translation initiation factor IF-1 from Rhodopseudomonas palustris (strain ATCC BAA-98 / CGA009).